A 369-amino-acid polypeptide reads, in one-letter code: tRNA pseudouridine synthase D (369 aa).

Residue D80 is the Nucleophile of the active site. In terms of domain architecture, TRUD spans 156–318 (GIPNWFGEQR…LKQERRALRL (163 aa)).

It belongs to the pseudouridine synthase TruD family.

The catalysed reaction is uridine(13) in tRNA = pseudouridine(13) in tRNA. Its function is as follows. Responsible for synthesis of pseudouridine from uracil-13 in transfer RNAs. In Xanthomonas axonopodis pv. citri (strain 306), this protein is tRNA pseudouridine synthase D.